We begin with the raw amino-acid sequence, 390 residues long: Formate-dependent phosphoribosylglycinamide formyltransferase (390 aa).

N(1)-(5-phospho-beta-D-ribosyl)glycinamide is bound by residues 18-19 (EL) and glutamate 78. ATP-binding positions include arginine 110, lysine 151, 156–161 (SSGKGQ), 191–194 (EEFL), and glutamate 199. An ATP-grasp domain is found at 115–305 (DLASKELNIK…EFELHLRAFL (191 aa)). Positions 264 and 276 each coordinate Mg(2+). Residues aspartate 283, lysine 353, and 360–361 (RR) contribute to the N(1)-(5-phospho-beta-D-ribosyl)glycinamide site.

The protein belongs to the PurK/PurT family. In terms of assembly, homodimer.

It carries out the reaction N(1)-(5-phospho-beta-D-ribosyl)glycinamide + formate + ATP = N(2)-formyl-N(1)-(5-phospho-beta-D-ribosyl)glycinamide + ADP + phosphate + H(+). It participates in purine metabolism; IMP biosynthesis via de novo pathway; N(2)-formyl-N(1)-(5-phospho-D-ribosyl)glycinamide from N(1)-(5-phospho-D-ribosyl)glycinamide (formate route): step 1/1. Involved in the de novo purine biosynthesis. Catalyzes the transfer of formate to 5-phospho-ribosyl-glycinamide (GAR), producing 5-phospho-ribosyl-N-formylglycinamide (FGAR). Formate is provided by PurU via hydrolysis of 10-formyl-tetrahydrofolate. The chain is Formate-dependent phosphoribosylglycinamide formyltransferase from Prochlorococcus marinus (strain MIT 9515).